A 250-amino-acid polypeptide reads, in one-letter code: Proteasome subunit alpha type-7-like (250 aa).

Serine 132 carries O-linked (GlcNAc) serine glycosylation.

Belongs to the peptidase T1A family. In terms of assembly, the 26S proteasome consists of a 20S proteasome core and two 19S regulatory subunits. The 20S proteasome core is a barrel-shaped complex made of 28 subunits that are arranged in four stacked rings. The two outer rings are each formed by seven alpha subunits, and the two inner rings are formed by seven beta subunits. The proteolytic activity is exerted by three beta-subunits PSMB5, PSMB6 and PSMB7. PSMA7 interacts directly with the PSMG1-PSMG2 heterodimer which promotes 20S proteasome assembly. Interacts with HIF1A. Interacts with RAB7A. Interacts with PRKN. Interacts with ABL1 and ABL2. Interacts with EMAP2. Interacts with MAVS.

The protein localises to the cytoplasm. The protein resides in the nucleus. Component of the 20S core proteasome complex involved in the proteolytic degradation of most intracellular proteins. This complex plays numerous essential roles within the cell by associating with different regulatory particles. Associated with two 19S regulatory particles, forms the 26S proteasome and thus participates in the ATP-dependent degradation of ubiquitinated proteins. The 26S proteasome plays a key role in the maintenance of protein homeostasis by removing misfolded or damaged proteins that could impair cellular functions, and by removing proteins whose functions are no longer required. Associated with the PA200 or PA28, the 20S proteasome mediates ubiquitin-independent protein degradation. This type of proteolysis is required in several pathways including spermatogenesis (20S-PA200 complex) or generation of a subset of MHC class I-presented antigenic peptides (20S-PA28 complex). Inhibits the transactivation function of HIF-1A under both normoxic and hypoxia-mimicking conditions. The interaction with EMAP2 increases the proteasome-mediated HIF-1A degradation under the hypoxic conditions. Plays a role in hepatitis C virus internal ribosome entry site-mediated translation. Mediates nuclear translocation of the androgen receptor (AR) and thereby enhances androgen-mediated transactivation. Promotes MAVS degradation and thereby negatively regulates MAVS-mediated innate immune response. The chain is Proteasome subunit alpha type-7-like (PSMA7L) from Macaca fascicularis (Crab-eating macaque).